We begin with the raw amino-acid sequence, 134 residues long: UPF0357 protein YCL012C (134 aa).

Residues 1-23 form the signal peptide; that stretch reads MKSLFYLKLLLWVVLLSLCLLMA. Residues S71 and S74 each carry the phosphoserine modification. K86 is covalently cross-linked (Glycyl lysine isopeptide (Lys-Gly) (interchain with G-Cter in ubiquitin)).

Belongs to the UPF0357 family.

The polypeptide is UPF0357 protein YCL012C (Saccharomyces cerevisiae (strain ATCC 204508 / S288c) (Baker's yeast)).